A 258-amino-acid polypeptide reads, in one-letter code: UPF0246 protein YaaA (258 aa).

This sequence belongs to the UPF0246 family.

This is UPF0246 protein YaaA from Escherichia coli (strain SMS-3-5 / SECEC).